The chain runs to 123 residues: Large ribosomal subunit protein uL29 (123 aa).

The protein belongs to the universal ribosomal protein uL29 family.

This chain is Large ribosomal subunit protein uL29 (RPL35), found in Theileria lestoquardi.